We begin with the raw amino-acid sequence, 122 residues long: Mth938 domain-containing protein (122 aa).

An MTH138-like domain region spans residues 6-122; the sequence is IASLSWGQMK…RVGGVFHSTC (117 aa).

This sequence belongs to the AAMDC family.

It is found in the cytoplasm. Its function is as follows. May play a role in preadipocyte differentiation and adipogenesis. This is Mth938 domain-containing protein (AAMDC) from Bos taurus (Bovine).